A 238-amino-acid chain; its full sequence is ATP synthase subunit a (238 aa).

The next 5 membrane-spanning stretches (helical) occupy residues 18 to 38, 75 to 95, 112 to 132, 179 to 199, and 203 to 223; these read LTILAMSLLTITIIFILVFWA, YSLLMFILFSFVFIANNLGLM, NFGVDITLSLLVAFICHIEGI, VVTGLLLQLAVLSPFTGPLAF, and IVWTAFSMFIGFIQAYVFIIL.

This sequence belongs to the ATPase A chain family. F-type ATPases have 2 components, CF(1) - the catalytic core - and CF(0) - the membrane proton channel. CF(1) has five subunits: alpha(3), beta(3), gamma(1), delta(1), epsilon(1). CF(0) has three main subunits: a(1), b(2) and c(9-12). The alpha and beta chains form an alternating ring which encloses part of the gamma chain. CF(1) is attached to CF(0) by a central stalk formed by the gamma and epsilon chains, while a peripheral stalk is formed by the delta and b chains.

The protein resides in the cell membrane. In terms of biological role, key component of the proton channel; it plays a direct role in the translocation of protons across the membrane. This chain is ATP synthase subunit a, found in Streptococcus agalactiae serotype Ia (strain ATCC 27591 / A909 / CDC SS700).